A 132-amino-acid polypeptide reads, in one-letter code: uncharacterized protein (132 aa).

Residues 10 to 30 (LVLFFTIILIALCPFVYYLWD) traverse the membrane as a helical segment. Positions 50–79 (KNCSTEIEHAIEEHKRKNKEKKEAKEKRLA) form a coiled coil.

The protein localises to the membrane. This is an uncharacterized protein from Invertebrate iridescent virus 6 (IIV-6).